The chain runs to 345 residues: Dihydroorotase (345 aa).

Zn(2+)-binding residues include histidine 13 and histidine 15. Substrate-binding positions include 15-17 and asparagine 41; that span reads HLR. Positions 99, 136, 174, and 247 each coordinate Zn(2+). Lysine 99 bears the N6-carboxylysine mark. Substrate is bound at residue histidine 136. Residue aspartate 247 is part of the active site. Residues histidine 251 and alanine 263 each contribute to the substrate site.

This sequence belongs to the metallo-dependent hydrolases superfamily. DHOase family. Class II DHOase subfamily. As to quaternary structure, homodimer. It depends on Zn(2+) as a cofactor.

The enzyme catalyses (S)-dihydroorotate + H2O = N-carbamoyl-L-aspartate + H(+). It functions in the pathway pyrimidine metabolism; UMP biosynthesis via de novo pathway; (S)-dihydroorotate from bicarbonate: step 3/3. Functionally, catalyzes the reversible cyclization of carbamoyl aspartate to dihydroorotate. This chain is Dihydroorotase, found in Halorhodospira halophila (strain DSM 244 / SL1) (Ectothiorhodospira halophila (strain DSM 244 / SL1)).